Here is a 98-residue protein sequence, read N- to C-terminus: NADH-ubiquinone oxidoreductase chain 4L (98 aa).

Transmembrane regions (helical) follow at residues 1–21 (MTSISLNLIMAFSLALAGVLI), 28–48 (STLLCLEGMMLSLFILMALLI), and 59–79 (APLILLVFSACEAGVGLALLV).

It belongs to the complex I subunit 4L family. As to quaternary structure, core subunit of respiratory chain NADH dehydrogenase (Complex I) which is composed of 45 different subunits.

Its subcellular location is the mitochondrion inner membrane. The enzyme catalyses a ubiquinone + NADH + 5 H(+)(in) = a ubiquinol + NAD(+) + 4 H(+)(out). Its function is as follows. Core subunit of the mitochondrial membrane respiratory chain NADH dehydrogenase (Complex I) which catalyzes electron transfer from NADH through the respiratory chain, using ubiquinone as an electron acceptor. Part of the enzyme membrane arm which is embedded in the lipid bilayer and involved in proton translocation. The sequence is that of NADH-ubiquinone oxidoreductase chain 4L (MT-ND4L) from Vombatus ursinus (Common wombat).